A 493-amino-acid polypeptide reads, in one-letter code: Glycerol kinase (493 aa).

Residue Thr13 participates in ADP binding. Positions 13, 14, and 15 each coordinate ATP. Thr13 contacts sn-glycerol 3-phosphate. Position 17 (Arg17) interacts with ADP. Sn-glycerol 3-phosphate-binding residues include Arg83, Glu84, Tyr135, and Asp244. The glycerol site is built by Arg83, Glu84, Tyr135, Asp244, and Gln245. ADP-binding residues include Thr266 and Gly309. ATP contacts are provided by Thr266, Gly309, Gln313, and Gly410. Residues Gly410 and Asn414 each contribute to the ADP site.

The protein belongs to the FGGY kinase family.

The enzyme catalyses glycerol + ATP = sn-glycerol 3-phosphate + ADP + H(+). Its pathway is polyol metabolism; glycerol degradation via glycerol kinase pathway; sn-glycerol 3-phosphate from glycerol: step 1/1. Its activity is regulated as follows. Inhibited by fructose 1,6-bisphosphate (FBP). Functionally, key enzyme in the regulation of glycerol uptake and metabolism. Catalyzes the phosphorylation of glycerol to yield sn-glycerol 3-phosphate. The protein is Glycerol kinase of Shewanella piezotolerans (strain WP3 / JCM 13877).